Here is a 146-residue protein sequence, read N- to C-terminus: Hemoglobin subunit beta-2 (146 aa).

Residues 2 to 146 (EWTDFERATI…VVSSLGRQYH (145 aa)) form the Globin domain. Residues histidine 63 and histidine 92 each coordinate heme b.

Belongs to the globin family. Hb2 is a heterotetramer of two alpha chains and two beta-2 chains. As to expression, red blood cells.

Functionally, involved in oxygen transport from gills to the various peripheral tissues. This chain is Hemoglobin subunit beta-2 (hbb2), found in Pseudaphritis urvillii (Congolli).